The sequence spans 278 residues: Gasdermin-like protein het-Q1 (278 aa).

The protein belongs to the gasdermin family. In terms of assembly, homooligomer; forms a homooligomeric ring-shaped pore complex when inserted in the membrane. Post-translationally, the precursor form is cleaved by het-Q2, generating the pore-forming protein (Gasdermin-like protein het-Q1, N-terminal).

The protein localises to the cell membrane. Its function is as follows. Gasdermin-like protein involved in heterokaryon incompatibility, a process that ensures that during spontaneous vegetative cell fusion, only compatible cells from the same colony survive (non-self-recognition). In P.anserina, the het-q locus exists as 2 incompatible alleles, het-Q1 (this entry) and het-Q2 (AC P0DW09). This form constitutes the precursor of the pore-forming protein: during the allorecognition process, it is cleaved by het-Q2, releasing the N-terminal moiety (Gasdermin-like protein het-Q1, N-terminal) that binds to membranes and forms pores, triggering cell death. In terms of biological role, pore-forming protein that causes membrane permeabilization and cell death. Released upon cleavage and maturation by het-Q2 and binds to membrane inner leaflet lipids. Homooligomerizes within the membrane and forms pores of 10-15 nanometers (nm) of inner diameter, triggering cell death. This is Gasdermin-like protein het-Q1 from Podospora anserina (strain S / ATCC MYA-4624 / DSM 980 / FGSC 10383) (Pleurage anserina).